Here is a 24-residue protein sequence, read N- to C-terminus: Brevinin-1SPc (24 aa).

A disulfide bond links C18 and C24.

In terms of tissue distribution, expressed by the skin glands.

Its subcellular location is the secreted. Its function is as follows. Antimicrobial peptide with activity against Gram-negative and Gram-positive bacteria and fungi. Also shows hemolytic activity. This chain is Brevinin-1SPc, found in Lithobates septentrionalis (Mink frog).